A 693-amino-acid polypeptide reads, in one-letter code: DNA ligase (693 aa).

NAD(+) is bound by residues 43–47, 92–93, and Glu-123; these read DEEYD and SL. Lys-125 serves as the catalytic N6-AMP-lysine intermediate. Residues Arg-146, Glu-180, Lys-296, and Lys-320 each contribute to the NAD(+) site. Cys-414, Cys-417, Cys-433, and Cys-438 together coordinate Zn(2+). The BRCT domain maps to 595-684; sequence VKYDVLKGLT…AKLKGYNFDE (90 aa).

The protein belongs to the NAD-dependent DNA ligase family. LigA subfamily. It depends on Mg(2+) as a cofactor. The cofactor is Mn(2+).

It carries out the reaction NAD(+) + (deoxyribonucleotide)n-3'-hydroxyl + 5'-phospho-(deoxyribonucleotide)m = (deoxyribonucleotide)n+m + AMP + beta-nicotinamide D-nucleotide.. DNA ligase that catalyzes the formation of phosphodiester linkages between 5'-phosphoryl and 3'-hydroxyl groups in double-stranded DNA using NAD as a coenzyme and as the energy source for the reaction. It is essential for DNA replication and repair of damaged DNA. This Thermotoga neapolitana (strain ATCC 49049 / DSM 4359 / NBRC 107923 / NS-E) protein is DNA ligase.